Consider the following 85-residue polypeptide: MPIRVAIVSPEQEVWSGDADMVVARTTDGDLGVLPGHVPLLGLLAPGGTVRVKTGGREISASVDGGFISVTHQGVSILAETAKLT.

It belongs to the ATPase epsilon chain family. As to quaternary structure, F-type ATPases have 2 components, CF(1) - the catalytic core - and CF(0) - the membrane proton channel. CF(1) has five subunits: alpha(3), beta(3), gamma(1), delta(1), epsilon(1). CF(0) has three main subunits: a, b and c.

It localises to the cell membrane. Functionally, produces ATP from ADP in the presence of a proton gradient across the membrane. This Frankia casuarinae (strain DSM 45818 / CECT 9043 / HFP020203 / CcI3) protein is ATP synthase epsilon chain.